We begin with the raw amino-acid sequence, 204 residues long: Phosphoheptose isomerase (204 aa).

Positions 38–199 constitute an SIS domain; sequence MAVALARGGK…LFEAVMELGP (162 aa). Position 53-55 (53-55) interacts with substrate; sequence NGG. Residues histidine 62 and glutamate 66 each coordinate Zn(2+). Substrate contacts are provided by residues glutamate 66, 95-96, 121-123, serine 126, and glutamine 172; these read ND and STS. Residues glutamine 172 and histidine 180 each coordinate Zn(2+).

It belongs to the SIS family. GmhA subfamily. As to quaternary structure, homotetramer. The cofactor is Zn(2+).

It is found in the cytoplasm. It catalyses the reaction 2 D-sedoheptulose 7-phosphate = D-glycero-alpha-D-manno-heptose 7-phosphate + D-glycero-beta-D-manno-heptose 7-phosphate. It functions in the pathway carbohydrate biosynthesis; D-glycero-D-manno-heptose 7-phosphate biosynthesis; D-glycero-alpha-D-manno-heptose 7-phosphate and D-glycero-beta-D-manno-heptose 7-phosphate from sedoheptulose 7-phosphate: step 1/1. In terms of biological role, catalyzes the isomerization of sedoheptulose 7-phosphate in D-glycero-D-manno-heptose 7-phosphate. This chain is Phosphoheptose isomerase, found in Solidesulfovibrio magneticus (strain ATCC 700980 / DSM 13731 / RS-1) (Desulfovibrio magneticus).